Consider the following 286-residue polypeptide: Alpha-ketoglutarate-dependent dioxygenase alkB homolog 3 (286 aa).

The tract at residues 1-38 is disordered; sequence MEDKRRRARVQGAWAGPAKSQATAQPAPTAENNLQQRP. The segment covering 20–36 has biased composition (polar residues); it reads SQATAQPAPTAENNLQQ. Residues tryptophan 115 and 141–143 contribute to the substrate site; that span reads YTY. A Fe2OG dioxygenase domain is found at 172-278; sequence SFNSLLCNLY…RINLTFRTVY (107 aa). Residue leucine 177 is modified to (4R)-5-hydroxyleucine; alternate. Position 177 is a (4R)-5-oxoleucine; alternate (leucine 177). A 2-oxoglutarate-binding site is contributed by 179–181; sequence NLY. Fe cation contacts are provided by histidine 191 and aspartate 193. Position 194 (aspartate 194) interacts with substrate. Residue histidine 257 participates in Fe cation binding. 2-oxoglutarate contacts are provided by residues 269-275 and arginine 275; that span reads RINLTFR.

The protein belongs to the alkB family. As to quaternary structure, interacts with the ASCC complex composed of ASCC1, ASCC2 and ASCC3. Interacts directly with ASCC3, and is thereby recruited to the ASCC complex. Interacts with OTUD4; the interaction is direct. Interacts with USP7 and USP9X. It depends on Fe(2+) as a cofactor. Post-translationally, ubiquitinated; undergoes 'Lys-48'-linked polyubiquitination. OTUD4 promotes USP7 and USP9X-dependent deubiquitination of 'Lys-48'-polyubiquitinated ALKBH3 promoting the repair of alkylated DNA lesions.

It is found in the nucleus. The protein resides in the cytoplasm. The enzyme catalyses an N(1)-methyladenosine in mRNA + 2-oxoglutarate + O2 = an adenosine in mRNA + formaldehyde + succinate + CO2. The catalysed reaction is a methylated nucleobase within DNA + 2-oxoglutarate + O2 = a nucleobase within DNA + formaldehyde + succinate + CO2. It catalyses the reaction an N(1)-methyl-2'-deoxyadenosine in single-stranded DNA + 2-oxoglutarate + O2 = a 2'-deoxyadenosine in single-stranded DNA + formaldehyde + succinate + CO2 + H(+). It carries out the reaction an N(3)-methyl-2'-deoxycytidine in single-stranded DNA + 2-oxoglutarate + O2 = a 2'-deoxycytidine in single-stranded DNA + formaldehyde + succinate + CO2 + H(+). The enzyme catalyses a 3,N(4)-etheno-2'-deoxycytidine in single-stranded DNA + 2-oxoglutarate + O2 + H2O = a 2'-deoxycytidine in single-stranded DNA + glyoxal + succinate + CO2. Activated by ascorbate. Its function is as follows. Dioxygenase that mediates demethylation of DNA and RNA containing 1-methyladenosine (m1A). Repairs alkylated DNA containing 1-methyladenosine (m1A) and 3-methylcytosine (m3C) by oxidative demethylation. Has a strong preference for single-stranded DNA. Able to process alkylated m3C within double-stranded regions via its interaction with ASCC3, which promotes DNA unwinding to generate single-stranded substrate needed for ALKBH3. Can repair exocyclic 3,N4-ethenocytosine adducs in single-stranded DNA. Also acts on RNA. Demethylates N(1)-methyladenosine (m1A) RNA, an epigenetic internal modification of messenger RNAs (mRNAs) highly enriched within 5'-untranslated regions (UTRs) and in the vicinity of start codons. Requires molecular oxygen, alpha-ketoglutarate and iron. The sequence is that of Alpha-ketoglutarate-dependent dioxygenase alkB homolog 3 from Bos taurus (Bovine).